The sequence spans 257 residues: Cytochrome c oxidase subunit 3 (257 aa).

6 helical membrane-spanning segments follow: residues 13 to 33 (PWPI…VSYF), 36 to 56 (LSMY…FQWW), 80 to 100 (GMIL…WAFF), 154 to 174 (YISA…FTMF), 195 to 215 (FFMT…FLLV), and 237 to 257 (AWYW…MYWW).

This sequence belongs to the cytochrome c oxidase subunit 3 family. In terms of assembly, component of the cytochrome c oxidase (complex IV, CIV), a multisubunit enzyme composed of a catalytic core of 3 subunits and several supernumerary subunits. The complex exists as a monomer or a dimer and forms supercomplexes (SCs) in the inner mitochondrial membrane with ubiquinol-cytochrome c oxidoreductase (cytochrome b-c1 complex, complex III, CIII).

It localises to the mitochondrion inner membrane. The enzyme catalyses 4 Fe(II)-[cytochrome c] + O2 + 8 H(+)(in) = 4 Fe(III)-[cytochrome c] + 2 H2O + 4 H(+)(out). Component of the cytochrome c oxidase, the last enzyme in the mitochondrial electron transport chain which drives oxidative phosphorylation. The respiratory chain contains 3 multisubunit complexes succinate dehydrogenase (complex II, CII), ubiquinol-cytochrome c oxidoreductase (cytochrome b-c1 complex, complex III, CIII) and cytochrome c oxidase (complex IV, CIV), that cooperate to transfer electrons derived from NADH and succinate to molecular oxygen, creating an electrochemical gradient over the inner membrane that drives transmembrane transport and the ATP synthase. Cytochrome c oxidase is the component of the respiratory chain that catalyzes the reduction of oxygen to water. Electrons originating from reduced cytochrome c in the intermembrane space (IMS) are transferred via the dinuclear copper A center (CU(A)) of subunit 2 and heme A of subunit 1 to the active site in subunit 1, a binuclear center (BNC) formed by heme A3 and copper B (CU(B)). The BNC reduces molecular oxygen to 2 water molecules using 4 electrons from cytochrome c in the IMS and 4 protons from the mitochondrial matrix. This is Cytochrome c oxidase subunit 3 (COIII) from Rhipicephalus sanguineus (Brown dog tick).